A 243-amino-acid chain; its full sequence is Uridylate kinase (243 aa).

Lysine 15 to glycine 18 is a binding site for ATP. Glycine 56 is a UMP binding site. ATP-binding residues include glycine 57 and arginine 61. Threonine 138–threonine 145 is a UMP binding site. ATP contacts are provided by asparagine 166, tyrosine 172, and aspartate 175.

The protein belongs to the UMP kinase family. Homohexamer.

Its subcellular location is the cytoplasm. The enzyme catalyses UMP + ATP = UDP + ADP. The protein operates within pyrimidine metabolism; CTP biosynthesis via de novo pathway; UDP from UMP (UMPK route): step 1/1. Inhibited by UTP. Functionally, catalyzes the reversible phosphorylation of UMP to UDP. This is Uridylate kinase from Mycoplasma genitalium (strain ATCC 33530 / DSM 19775 / NCTC 10195 / G37) (Mycoplasmoides genitalium).